The sequence spans 164 residues: Cytochrome c-type biogenesis protein CcmE (164 aa).

Residues 1–7 (MTRKQRR) lie on the Cytoplasmic side of the membrane. A helical; Signal-anchor for type II membrane protein transmembrane segment spans residues 8–28 (LLMIGGAGVVLVVAVGLVLNA). Residues 29 to 164 (MRGSIVFFST…ASADAAGPSR (136 aa)) are Periplasmic-facing. The heme site is built by His122 and Tyr126. The segment covering 137-149 (KQGHWKDDYEKKP) has biased composition (basic and acidic residues). The segment at 137 to 164 (KQGHWKDDYEKKPPGAPGASADAAGPSR) is disordered. A compositionally biased stretch (low complexity) spans 153 to 164 (PGASADAAGPSR).

It belongs to the CcmE/CycJ family.

The protein localises to the cell inner membrane. Functionally, heme chaperone required for the biogenesis of c-type cytochromes. Transiently binds heme delivered by CcmC and transfers the heme to apo-cytochromes in a process facilitated by CcmF and CcmH. This is Cytochrome c-type biogenesis protein CcmE from Rhodopseudomonas palustris (strain BisB5).